The chain runs to 355 residues: Cell surface glycoprotein CD200 receptor 1 (355 aa).

Positions 1–26 are cleaved as a signal peptide; the sequence is MPCTWITSDLQLRLILTLFFVAECLS. Over 27 to 267 the chain is Extracellular; the sequence is AGMEGTKTSN…QGAEIPAHLK (241 aa). Positions 35–55 are enriched in polar residues; sequence SNNSMQQLDNGNHSSVSTTSS. The interval 35 to 56 is disordered; sequence SNNSMQQLDNGNHSSVSTTSST. N-linked (GlcNAc...) asparagine glycosylation is found at asparagine 46, asparagine 123, and asparagine 153. Intrachain disulfides connect cysteine 85–cysteine 156, cysteine 108–cysteine 124, cysteine 191–cysteine 241, and cysteine 210–cysteine 229. The 119-residue stretch at 139–257 folds into the Ig-like C2-type domain; it reads PALQVDPVAI…GNKSLSIQLS (119 aa). The chain crosses the membrane as a helical span at residues 268-288; sequence NLYITAPIFIILIVVGSIWLL. Residues 289–355 lie on the Cytoplasmic side of the membrane; sequence KISGCRKCKL…NLHTIYVPRV (67 aa).

This sequence belongs to the CD200R family. CD200 and CD200R1 interact via their respective N-terminal Ig-like domains.

It is found in the cell membrane. Functionally, inhibitory receptor for the CD200/OX2 cell surface glycoprotein. Limits inflammation by inhibiting the expression of pro-inflammatory molecules including TNF-alpha, interferons, and inducible nitric oxide synthase (iNOS) in response to selected stimuli. The sequence is that of Cell surface glycoprotein CD200 receptor 1 (CD200R1) from Bos taurus (Bovine).